Reading from the N-terminus, the 273-residue chain is 3-methyl-2-oxobutanoate hydroxymethyltransferase 2 (273 aa).

Aspartate 50 and aspartate 89 together coordinate Mg(2+). 3-methyl-2-oxobutanoate contacts are provided by residues 50 to 51 (DS), aspartate 89, and lysine 119. Glutamate 121 serves as a coordination point for Mg(2+). Catalysis depends on glutamate 188, which acts as the Proton acceptor.

This sequence belongs to the PanB family. As to quaternary structure, homodecamer; pentamer of dimers. The cofactor is Mg(2+).

The protein resides in the cytoplasm. The catalysed reaction is 3-methyl-2-oxobutanoate + (6R)-5,10-methylene-5,6,7,8-tetrahydrofolate + H2O = 2-dehydropantoate + (6S)-5,6,7,8-tetrahydrofolate. The protein operates within cofactor biosynthesis; (R)-pantothenate biosynthesis; (R)-pantoate from 3-methyl-2-oxobutanoate: step 1/2. Functionally, catalyzes the reversible reaction in which hydroxymethyl group from 5,10-methylenetetrahydrofolate is transferred onto alpha-ketoisovalerate to form ketopantoate. This chain is 3-methyl-2-oxobutanoate hydroxymethyltransferase 2, found in Zymomonas mobilis subsp. mobilis (strain ATCC 31821 / ZM4 / CP4).